A 300-amino-acid chain; its full sequence is Geranylgeranyl pyrophosphate synthase (300 aa).

Residue Met1 is modified to N-acetylmethionine. Positions 25, 28, and 57 each coordinate isopentenyl diphosphate. Mg(2+) is bound by residues Asp64 and Asp68. Residue Arg73 participates in dimethylallyl diphosphate binding. Arg74 contacts isopentenyl diphosphate. Positions 151, 152, 185, 202, and 212 each coordinate dimethylallyl diphosphate.

It belongs to the FPP/GGPP synthase family. In terms of assembly, homohexamer; trimer of homodimers. Mg(2+) serves as cofactor.

It localises to the cytoplasm. It is found in the perinuclear region. The protein resides in the myofibril. The protein localises to the sarcomere. Its subcellular location is the z line. The catalysed reaction is isopentenyl diphosphate + dimethylallyl diphosphate = (2E)-geranyl diphosphate + diphosphate. It carries out the reaction isopentenyl diphosphate + (2E)-geranyl diphosphate = (2E,6E)-farnesyl diphosphate + diphosphate. The enzyme catalyses isopentenyl diphosphate + (2E,6E)-farnesyl diphosphate = (2E,6E,10E)-geranylgeranyl diphosphate + diphosphate. Its pathway is isoprenoid biosynthesis; farnesyl diphosphate biosynthesis; farnesyl diphosphate from geranyl diphosphate and isopentenyl diphosphate: step 1/1. The protein operates within isoprenoid biosynthesis; geranyl diphosphate biosynthesis; geranyl diphosphate from dimethylallyl diphosphate and isopentenyl diphosphate: step 1/1. It participates in isoprenoid biosynthesis; geranylgeranyl diphosphate biosynthesis; geranylgeranyl diphosphate from farnesyl diphosphate and isopentenyl diphosphate: step 1/1. Its function is as follows. Catalyzes the trans-addition of the three molecules of IPP onto DMAPP to form geranylgeranyl pyrophosphate, an important precursor of carotenoids and geranylated proteins. The polypeptide is Geranylgeranyl pyrophosphate synthase (Ggps1) (Rattus norvegicus (Rat)).